The primary structure comprises 146 residues: MSDIQLNSLKPAEGAKHAKRRVGRGIGSGLGKTAGRGHKGQKSRSGGFHKVGFEGGQMPLQRRLPKRGFTPLGQHLYAEVRLSDLQRLDVEEIDVQALKAAGVVGQGVRYAKVIKSGELSRKVVLRGITATAGARAAVEAAGGSLA.

The interval 1–65 (MSDIQLNSLK…GQMPLQRRLP (65 aa)) is disordered. A compositionally biased stretch (gly residues) spans 24–34 (RGIGSGLGKTA).

Belongs to the universal ribosomal protein uL15 family. Part of the 50S ribosomal subunit.

Binds to the 23S rRNA. This Bordetella avium (strain 197N) protein is Large ribosomal subunit protein uL15.